The chain runs to 464 residues: Tyrosine aminotransferase (464 aa).

Lysine 284 carries the post-translational modification N6-(pyridoxal phosphate)lysine.

Belongs to the class-I pyridoxal-phosphate-dependent aminotransferase family. In terms of assembly, homodimer. Pyridoxal 5'-phosphate is required as a cofactor. In terms of tissue distribution, expressed in the muscle. Expressed in the hypodermis and intestine.

The catalysed reaction is L-tyrosine + 2-oxoglutarate = 3-(4-hydroxyphenyl)pyruvate + L-glutamate. It carries out the reaction 3-hydroxy-L-phenylalanine + 2-oxoglutarate = 3-(3-hydroxyphenyl)pyruvate + L-glutamate. It functions in the pathway amino-acid degradation; L-phenylalanine degradation; acetoacetate and fumarate from L-phenylalanine: step 2/6. Functionally, transaminase involved in tyrosine breakdown. Converts tyrosine to p-hydroxyphenylpyruvate. Has no transaminase activity towards phenylalanine. Plays protective role against oxidative stress, metabolizing meta-tyrosine and negatively regulating its accumulation. Plays a role in modulating the daf-2/insulin receptor-like transduction pathway through regulating tyrosine levels. Negatively regulates dauer formation. Plays a role in longevity. This chain is Tyrosine aminotransferase, found in Caenorhabditis elegans.